The primary structure comprises 229 residues: Potassium/proton antiporter CemA (229 aa).

4 consecutive transmembrane segments (helical) span residues F7–F27, L114–L134, I154–I174, and I189–I209.

This sequence belongs to the CemA family.

Its subcellular location is the plastid. The protein resides in the chloroplast inner membrane. It carries out the reaction K(+)(in) + H(+)(out) = K(+)(out) + H(+)(in). In terms of biological role, contributes to K(+)/H(+) antiport activity by supporting proton efflux to control proton extrusion and homeostasis in chloroplasts in a light-dependent manner to modulate photosynthesis. Prevents excessive induction of non-photochemical quenching (NPQ) under continuous-light conditions. Indirectly promotes efficient inorganic carbon uptake into chloroplasts. This Gossypium hirsutum (Upland cotton) protein is Potassium/proton antiporter CemA.